A 389-amino-acid chain; its full sequence is Probable nitrate transporter NarT (389 aa).

12 consecutive transmembrane segments (helical) span residues Thr-14–Ile-34, Ile-45–Tyr-65, Ile-69–Phe-89, Gly-97–Val-117, Gly-139–Trp-159, Thr-161–Gly-181, Trp-211–Val-231, Gly-246–Phe-266, Ala-268–Ile-288, Leu-294–Phe-314, Ile-331–Ala-351, and Leu-353–Phe-373.

This sequence belongs to the major facilitator superfamily. Nitrate/nitrite porter (TC 2.A.1.8) family.

It is found in the cell membrane. In terms of biological role, probably required for nitrate uptake under anoxic conditions. Also possibly involved in excretion of nitrite produced by the dissimilatory reduction of nitrate. The protein is Probable nitrate transporter NarT (narT) of Staphylococcus aureus (strain USA300).